We begin with the raw amino-acid sequence, 636 residues long: Nucleolin 2 (636 aa).

Disordered regions lie at residues 1–386 (MGKS…SKTL), 458–481 (ANER…SRTI), and 544–636 (SEIG…NDEE). Basic and acidic residues-rich tracts occupy residues 43 to 63 (KELI…KKVE) and 76 to 89 (EKTK…KDES). Residues 90 to 103 (SSEEEDDSSSDEEI) are compositionally biased toward acidic residues. Positions 104–118 (APAKKRPEPIKKAKV) are enriched in basic and acidic residues. Composition is skewed to acidic residues over residues 122–133 (SSDDDSTSDEET), 152–163 (SSDDDSSSDEET), and 182–193 (SSDDDSSSDEET). Basic and acidic residues predominate over residues 224–238 (TPAKKEPIVVKKDSS). Composition is skewed to acidic residues over residues 267–278 (SSEEESSSDDEP), 299–311 (SSEE…ESDD), and 331–341 (SSDESSDESDK). Over residues 342–367 (EESKDEKVTPKKKDSDVEMVDAEQKS) the composition is skewed to basic and acidic residues. A compositionally biased stretch (polar residues) spans 368 to 383 (NAKQPKTPTNQTQGGS). RRM domains follow at residues 384–460 (KTLF…LANE) and 479–558 (RTIY…ESRP). Positions 464-481 (PRNSNPGRKGEGSQSRTI) are enriched in polar residues. Composition is skewed to basic and acidic residues over residues 552-566 (HVEE…EGRS) and 579-604 (RHSD…DRGA). Residues 622-636 (MESSKGTKTVFNDEE) show a composition bias toward polar residues.

Interacts with THAL in the nucleus. As to expression, expressed at low levels in flower buds.

The protein resides in the nucleus. Its subcellular location is the nucleolus. Its function is as follows. Involved in pre-rRNA processing and ribosome assembly. This chain is Nucleolin 2, found in Arabidopsis thaliana (Mouse-ear cress).